The following is a 309-amino-acid chain: Cyclin-dependent kinase B1-1 (309 aa).

The Protein kinase domain occupies 4 to 301; sequence YEKLEKVGEG…AKTALDHPYF (298 aa). ATP is bound by residues 10-18 and Lys33; that span reads VGEGTYGKV. Position 15 is a phosphotyrosine (Tyr15). The Proton acceptor role is filled by Asp142. Thr176 carries the post-translational modification Phosphothreonine; by CAK.

The protein belongs to the protein kinase superfamily. CMGC Ser/Thr protein kinase family. CDC2/CDKX subfamily. Interacts with CKS1. Interacts with CYCU3-1. Interacts with SIM, SMR1 and SMR2. In terms of tissue distribution, highly expressed in guard cells and stomatal precursor cells of cotyledons. Expressed in roots, stems, flowers and siliques.

Its subcellular location is the nucleus. The catalysed reaction is L-seryl-[protein] + ATP = O-phospho-L-seryl-[protein] + ADP + H(+). It catalyses the reaction L-threonyl-[protein] + ATP = O-phospho-L-threonyl-[protein] + ADP + H(+). It carries out the reaction [DNA-directed RNA polymerase] + ATP = phospho-[DNA-directed RNA polymerase] + ADP + H(+). Its activity is regulated as follows. Phosphorylation at Thr-14 or Tyr-15 inactivates the enzyme, while phosphorylation at Thr-176 activates it. In terms of biological role, may control G2/M (mitosis) phase progression. Plays a role in regulating seedling growth in darkness via regulation of hypocotyl cell elongation and cotyledon cell development. Plays a role in stomatal development. Required to suppress endoreduplication. Together with CDKB1-2, promotes both the last division in the stomatal cell lineage as well as the number of stomata. In collaboration with MYB124 and MYB88, restrict the G1/S transition and chloroplast and nuclear number during stomatal formation, and normally maintain fate and developmental progression throughout the stomatal cell lineage. The polypeptide is Cyclin-dependent kinase B1-1 (CDKB1-1) (Arabidopsis thaliana (Mouse-ear cress)).